The following is a 259-amino-acid chain: Protein CWC15 homolog (259 aa).

A disordered region spans residues 1-182 (MTTAARPTFD…EKKQEDERIR (182 aa)). The segment covering 52 to 71 (DENRNRDFRKELEEREREAR) has biased composition (basic and acidic residues). Low complexity-rich tracts occupy residues 72-82 (SGTGATSSSSG) and 114-126 (QQQAQQAAQQQAA). Over residues 129–150 (DADEPLDNDSSDSDSDSDDDDA) the composition is skewed to acidic residues. Positions 150 to 182 (AALLAELQKIKQERLQETARRESEKKQEDERIR) form a coiled coil. A compositionally biased stretch (basic and acidic residues) spans 157–182 (QKIKQERLQETARRESEKKQEDERIR).

This sequence belongs to the CWC15 family.

Functionally, involved in pre-mRNA splicing. The protein is Protein CWC15 homolog (c12.1) of Drosophila melanogaster (Fruit fly).